The primary structure comprises 344 residues: MACEPQMDPGGAAGPLPTSSPGWSPLPGGSPPGWGQELRSGQVLTVLRIDNTCAPISFDLGAAEEQLQTWGIQVPADQYRSLAESALLEPQVRRYIIYNSRPMRLAFAVVFYVVVWANIYSTSQMFALGNHWAGVLLVTLAATSLTLTLVVIFERHQRKANTNTDLRLTAANGALLRHRVLLGVTDTVEGCQSVIQLWFVYFDLETCAQFLSDHIREMKMSQESLLRSRLSQLCVVMETGVSPTANEGPENLLEETPLLPDRPGSTEKPLMQTELRQLVPEAEPEEMAQQLLAVFGGYYTRLLVTSQLPQALGTRHMDSPRIPCPCQLIEAYILGTECCPFLTR.

The tract at residues 1 to 31 (MACEPQMDPGGAAGPLPTSSPGWSPLPGGSP) is disordered. Over residues 14–27 (GPLPTSSPGWSPLP) the composition is skewed to low complexity. Transmembrane regions (helical) follow at residues 106 to 126 (AFAV…SQMF) and 133 to 153 (AGVL…VVIF). The interval 244-266 (TANEGPENLLEETPLLPDRPGST) is disordered. Over residues 247–259 (EGPENLLEETPLL) the composition is skewed to low complexity.

Interacts with ITGAM; this interaction inhibits ITGAM degradation via the endosome-lysosome pathway. Interacts with ITGB4; this interaction prevents ITGB4 degradation.

The protein resides in the cell membrane. Functionally, stabilizes cell surface expression of ITGAM and participates in the adhesion and migration of phagocytes during bacterial clearance. This is Transmembrane protein 268 (TMEM268) from Bos taurus (Bovine).